Here is a 286-residue protein sequence, read N- to C-terminus: MQTVHTRAALAAALDPWRRAGERIALVPTMGNLHAGHLALVRRARAEADRVVATIFVNPLQFDRPEDLAAYPRTLEADAAALAGAGVDLLFAPAEQEVYPRGRDGVTRVEVPGLGDELEGAHRPGHFIGVATVVCKLFAMTRPDVAVFGEKDFQQLLIIRTMNADLDLGVRVLSEPTVREPDGLAMSSRNGYLGPEDRARAPALHAALRALAGALERGERDFPALEQAARSQIEAAGLRPEYVSLRRRQDLDLPGPGDRELVILAAAWCGPARLIDNLPVDLPPSG.

30-37 (MGNLHAGH) provides a ligand contact to ATP. H37 (proton donor) is an active-site residue. Residue Q61 coordinates (R)-pantoate. Residue Q61 participates in beta-alanine binding. Residue 149-152 (GEKD) participates in ATP binding. (R)-pantoate is bound at residue Q155. ATP is bound by residues V178 and 186–189 (MSSR).

Belongs to the pantothenate synthetase family. Homodimer.

It localises to the cytoplasm. It carries out the reaction (R)-pantoate + beta-alanine + ATP = (R)-pantothenate + AMP + diphosphate + H(+). The protein operates within cofactor biosynthesis; (R)-pantothenate biosynthesis; (R)-pantothenate from (R)-pantoate and beta-alanine: step 1/1. Functionally, catalyzes the condensation of pantoate with beta-alanine in an ATP-dependent reaction via a pantoyl-adenylate intermediate. This chain is Pantothenate synthetase, found in Thioalkalivibrio sulfidiphilus (strain HL-EbGR7).